The sequence spans 152 residues: Transcriptional regulator MraZ (152 aa).

SpoVT-AbrB domains follow at residues 5–52 and 81–124; these read ATMV…PLPE and ASEC…DEQT.

The protein belongs to the MraZ family. Forms oligomers.

Its subcellular location is the cytoplasm. The protein localises to the nucleoid. Functionally, negatively regulates its own expression and that of the subsequent genes in the proximal part of the division and cell wall (dcw) gene cluster. Acts by binding directly to DNA. May also regulate the expression of genes outside the dcw cluster. The polypeptide is Transcriptional regulator MraZ (Yersinia pseudotuberculosis serotype O:1b (strain IP 31758)).